A 192-amino-acid chain; its full sequence is Interleukin-18 (192 aa).

Positions 1 to 35 are excised as a propeptide; sequence MAAIPVDDCINFVGMKFIDNTLYFVADSDENLETD.

This sequence belongs to the IL-1 family. As to quaternary structure, forms a ternary complex with ligand-binding receptor subunit IL18R1 and signaling receptor subunit IL18RAP at the plasma membrane. Mature IL18 first binds to IL18R1 forming a low affinity binary complex, which then interacts with IL18RAP to form a high affinity ternary complex that signals inside the cell. Interacts with cargo receptor TMED10; the interaction mediates the translocation from the cytoplasm into the ERGIC (endoplasmic reticulum-Golgi intermediate compartment) and thereby secretion. In terms of processing, the pro-IL-18 precursor is processed by CASP1, CASP4 or CASP5 to yield its mature, active form. The pro-IL-18 precursor features autoinhibitory interactions between the propeptide and the post-cleavage-site region, preventing recognition by the IL18R1 receptor. Processing by CASP1, CASP4 or CASP5 induces conformational changes to generate critical receptor-binding sites. The mature form is then secreted and released in the extracellular milieu by passing through the gasdermin-D (GSDMD) pore. In contrast, cleavage by CASP3 inactivates IL18.

Its subcellular location is the cytoplasm. It localises to the cytosol. The protein localises to the secreted. In terms of biological role, pro-inflammatory cytokine primarily involved in epithelial barrier repair, polarized T-helper 1 (Th1) cell and natural killer (NK) cell immune responses. Upon binding to IL18R1 and IL18RAP, forms a signaling ternary complex which activates NF-kappa-B, triggering synthesis of inflammatory mediators. Synergizes with IL12/interleukin-12 to induce IFNG synthesis from T-helper 1 (Th1) cells and natural killer (NK) cells. Involved in transduction of inflammation downstream of pyroptosis: its mature form is specifically released in the extracellular milieu by passing through the gasdermin-D (GSDMD) pore. This chain is Interleukin-18 (IL18), found in Felis catus (Cat).